The chain runs to 183 residues: Dual-action ribosomal maturation protein DarP (183 aa).

It belongs to the DarP family.

Its subcellular location is the cytoplasm. Its function is as follows. Member of a network of 50S ribosomal subunit biogenesis factors which assembles along the 30S-50S interface, preventing incorrect 23S rRNA structures from forming. Promotes peptidyl transferase center (PTC) maturation. This Escherichia coli O81 (strain ED1a) protein is Dual-action ribosomal maturation protein DarP.